Consider the following 121-residue polypeptide: Large ribosomal subunit protein eL34A (121 aa).

It belongs to the eukaryotic ribosomal protein eL34 family. As to quaternary structure, component of the large ribosomal subunit (LSU). Mature yeast ribosomes consist of a small (40S) and a large (60S) subunit. The 40S small subunit contains 1 molecule of ribosomal RNA (18S rRNA) and 33 different proteins (encoded by 57 genes). The large 60S subunit contains 3 rRNA molecules (25S, 5.8S and 5S rRNA) and 46 different proteins (encoded by 81 genes).

It is found in the cytoplasm. Component of the ribosome, a large ribonucleoprotein complex responsible for the synthesis of proteins in the cell. The small ribosomal subunit (SSU) binds messenger RNAs (mRNAs) and translates the encoded message by selecting cognate aminoacyl-transfer RNA (tRNA) molecules. The large subunit (LSU) contains the ribosomal catalytic site termed the peptidyl transferase center (PTC), which catalyzes the formation of peptide bonds, thereby polymerizing the amino acids delivered by tRNAs into a polypeptide chain. The nascent polypeptides leave the ribosome through a tunnel in the LSU and interact with protein factors that function in enzymatic processing, targeting, and the membrane insertion of nascent chains at the exit of the ribosomal tunnel. The chain is Large ribosomal subunit protein eL34A from Saccharomyces cerevisiae (strain ATCC 204508 / S288c) (Baker's yeast).